An 816-amino-acid polypeptide reads, in one-letter code: Phosphatidylinositol 4-kinase beta (816 aa).

3 disordered regions span residues 1–28, 93–120, and 249–318; these read MGDTVVAPAPLKPASESTPGPPGNNGGS, PPTGIREEDDETEATVASGTAKGARRRR, and HRKR…SFSS. Gly2 is subject to N-acetylglycine. An interaction with ACBD3 region spans residues 2-68; that stretch reads GDTVVAPAPL…VKLSHGGVAS (67 aa). One can recognise a PIK helical domain in the interval 49–242; that stretch reads QKACQEVLQK…GTKLRRLILS (194 aa). Ser258 is modified (phosphoserine). Thr263 carries the post-translational modification Phosphothreonine. A phosphoserine mark is found at Ser266, Ser275, Ser277, Ser284, Ser294, Ser428, and Ser511. A compositionally biased stretch (low complexity) spans 278–294; it reads DATASISLSSSLKRTAS. Residues Thr517 and Thr519 each carry the phosphothreonine modification. Positions 535-801 constitute a PI3K/PI4K catalytic domain; that stretch reads EPWQEKVRRI…MVDGSMRSIT (267 aa). A G-loop region spans residues 541–547; that stretch reads VRRIREG. Residues 668–676 form a catalytic loop region; the sequence is QVKDRHNGN. The segment at 687–711 is activation loop; that stretch reads HIDFGFILSSSPRNLGFETSAFKLT.

This sequence belongs to the PI3/PI4-kinase family. Type III PI4K subfamily. In terms of assembly, interacts with ARF1 and ARF3 in the Golgi complex, but not with ARF4, ARF5 or ARF6. Interacts with NCS1/FREQ in a calcium-independent manner. Interacts with CALN1/CABP8 and CALN2/CABP7; in a calcium-dependent manner; this interaction competes with NCS1/FREQ binding. Interacts with ACBD3. Interacts with ARMH3, YWHAB, YWHAE, YWHAG, YWHAH, YWHAQ, YWHAZ and SFN. Interacts with GGA2 (via VHS domain); the interaction is important for PI4KB location at the Golgi apparatus membrane. Interacts with ATG9A. Requires Mg(2+) as cofactor. Mn(2+) serves as cofactor.

Its subcellular location is the endomembrane system. It is found in the mitochondrion outer membrane. It localises to the rough endoplasmic reticulum membrane. The protein resides in the golgi apparatus. The protein localises to the golgi apparatus membrane. It carries out the reaction a 1,2-diacyl-sn-glycero-3-phospho-(1D-myo-inositol) + ATP = a 1,2-diacyl-sn-glycero-3-phospho-(1D-myo-inositol 4-phosphate) + ADP + H(+). With respect to regulation, inhibited by wortmannin. Increased kinase activity upon interaction with NCS1/FREQ. In terms of biological role, phosphorylates phosphatidylinositol (PI) in the first committed step in the production of the second messenger inositol-1,4,5,-trisphosphate (PIP). May regulate Golgi disintegration/reorganization during mitosis, possibly via its phosphorylation. Involved in Golgi-to-plasma membrane trafficking. May play an important role in the inner ear development. The sequence is that of Phosphatidylinositol 4-kinase beta (PI4KB) from Rhinolophus ferrumequinum (Greater horseshoe bat).